The chain runs to 266 residues: Type III pantothenate kinase (266 aa).

6–13 is an ATP binding site; it reads DAGNTNIV. Position 107–110 (107–110) interacts with substrate; sequence GADR. Aspartate 109 functions as the Proton acceptor in the catalytic mechanism. Aspartate 129 contributes to the K(+) binding site. Residue threonine 132 participates in ATP binding. Substrate is bound at residue threonine 184.

It belongs to the type III pantothenate kinase family. As to quaternary structure, homodimer. NH4(+) serves as cofactor. The cofactor is K(+).

The protein resides in the cytoplasm. It carries out the reaction (R)-pantothenate + ATP = (R)-4'-phosphopantothenate + ADP + H(+). Its pathway is cofactor biosynthesis; coenzyme A biosynthesis; CoA from (R)-pantothenate: step 1/5. Functionally, catalyzes the phosphorylation of pantothenate (Pan), the first step in CoA biosynthesis. The chain is Type III pantothenate kinase from Acidiphilium cryptum (strain JF-5).